The following is a 46-amino-acid chain: Alpha-1-antiproteinase (46 aa).

Serine 30 bears the Phosphoserine mark.

The protein belongs to the serpin family. Post-translationally, N-glycosylated; contains bi- and triantennary glycans with a bisecting N-acetylglucosamine and fucose residue. In terms of tissue distribution, plasma.

Its subcellular location is the secreted. The polypeptide is Alpha-1-antiproteinase (Notamacropus eugenii (Tammar wallaby)).